Consider the following 117-residue polypeptide: Protein YchN (117 aa).

The protein to M.jannaschii MJ0989. As to quaternary structure, homohexamer. The hexamer is formed by a dimer of trimers.

The sequence is that of Protein YchN (ychN) from Escherichia coli O157:H7.